A 505-amino-acid chain; its full sequence is Glycerol kinase (505 aa).

Residue Thr14 coordinates ADP. Thr14, Thr15, and Ser16 together coordinate ATP. Position 14 (Thr14) interacts with sn-glycerol 3-phosphate. An ADP-binding site is contributed by Arg18. Sn-glycerol 3-phosphate is bound by residues Arg84, Glu85, Tyr136, and Asp246. Arg84, Glu85, Tyr136, Asp246, and Gln247 together coordinate glycerol. ADP-binding residues include Thr268 and Gly311. Residues Thr268, Gly311, Gln315, and Gly412 each contribute to the ATP site. ADP contacts are provided by Gly412 and Asn416.

The protein belongs to the FGGY kinase family.

It catalyses the reaction glycerol + ATP = sn-glycerol 3-phosphate + ADP + H(+). The protein operates within polyol metabolism; glycerol degradation via glycerol kinase pathway; sn-glycerol 3-phosphate from glycerol: step 1/1. Inhibited by fructose 1,6-bisphosphate (FBP). Its function is as follows. Key enzyme in the regulation of glycerol uptake and metabolism. Catalyzes the phosphorylation of glycerol to yield sn-glycerol 3-phosphate. This is Glycerol kinase from Vibrio parahaemolyticus serotype O3:K6 (strain RIMD 2210633).